A 1745-amino-acid chain; its full sequence is Collagen alpha-3(V) chain (1745 aa).

Residues 1 to 29 form the signal peptide; it reads MGNRRDLGQPRAGLCLLLAALQLLPGTQA. The Laminin G-like domain maps to 62–224; it reads DRAFRIGQAS…QACERYLPDC (163 aa). Residues Asn-102 and Asn-141 are each glycosylated (N-linked (GlcNAc...) asparagine). The nonhelical region stretch occupies residues 211-391; that stretch reads QAAFQACERY…AVIEKGQQFE (181 aa). Disordered regions lie at residues 230–304, 322–362, 387–439, and 476–1492; these read AATV…TPTP, RSLD…EYPS, GQQF…RGPP, and SMKG…PAEL. Residues 244-267 are compositionally biased toward basic residues; that stretch reads PRRKGKGKGRKKGRGRKGKGRKKN. Ser-349 carries O-linked (Xyl...) (chondroitin sulfate) serine glycosylation. 2 Collagen-like domains span residues 391 to 440 and 482 to 538; these read EGPP…GPPG and GPVG…DGAR. Positions 392 to 1489 are triple-helical region; that stretch reads GPPGAPGPQG…AGPPGPPGAP (1098 aa). Over residues 406-424 the composition is skewed to pro residues; the sequence is SGPPGPPGFPGDPGPPGPA. Composition is skewed to low complexity over residues 426–439, 489–499, and 597–619; these read LPGI…RGPP, RPGPVGLPGHP, and EPGP…PGVT. The span at 724–733 shows a compositional bias: basic and acidic residues; sequence QGEKGEKGED. Positions 765 to 792 are enriched in low complexity; the sequence is PKGQAGQAGEEGPPGSAGEKGKLGVPGL. 3 Collagen-like domains span residues 824 to 877, 905 to 950, and 951 to 989; these read GQPG…QGPP, GFQG…GLPG, and LEGR…GDPG. The span at 967 to 979 shows a compositional bias: low complexity; it reads LGKEGPAGLRGFP. Residues 1016 to 1025 are compositionally biased toward gly residues; it reads GPAGGIGLPG. Composition is skewed to low complexity over residues 1116-1126 and 1141-1152; these read ADGAQGRRGPP and VGVIGPPGLQGL. Over residues 1190–1199 the composition is skewed to gly residues; sequence GLPGGVGQPG. Positions 1213–1222 are enriched in pro residues; sequence PGPPGAPGIP. The span at 1234–1243 shows a compositional bias: low complexity; it reads SGPSGAAGPP. The span at 1318–1330 shows a compositional bias: basic and acidic residues; it reads MGREGREGEKGAK. Positions 1405-1416 are enriched in low complexity; sequence IGLIGLIGPPGE. Pro residues predominate over residues 1429 to 1443; that stretch reads QGPPGPKGDPGPPGP. Residues 1430–1488 form the Collagen-like 6 domain; the sequence is GPPGPKGDPGPPGPIGSLGHPGPPGVAGPLGQKGSKGSPGSMGPRGDTGPAGPPGPPGA. Low complexity predominate over residues 1458-1479; that stretch reads PLGQKGSKGSPGSMGPRGDTGP. The region spanning 1514–1744 is the Fibrillar collagen NC1 domain; it reads EEVLASLTSL…GFELGPVCFS (231 aa). 2 disulfide bridges follow: Cys-1585-Cys-1742 and Cys-1651-Cys-1696.

This sequence belongs to the fibrillar collagen family. Trimers of two alpha 1(V) and one alpha 2(V) chains in most tissues and trimers of one alpha 1(V), one alpha 2(V), and one alpha 3(V) chains in placenta. Post-translationally, prolines at the third position of the tripeptide repeating unit (G-X-Y) are hydroxylated in some or all of the chains. As to expression, detected in fibroblasts (at protein level). Detected in urine (at protein level).

Its subcellular location is the secreted. It is found in the extracellular space. It localises to the extracellular matrix. Type V collagen is a member of group I collagen (fibrillar forming collagen). It is a minor connective tissue component of nearly ubiquitous distribution. Type V collagen binds to DNA, heparan sulfate, thrombospondin, heparin, and insulin. This Homo sapiens (Human) protein is Collagen alpha-3(V) chain (COL5A3).